Here is a 282-residue protein sequence, read N- to C-terminus: Probable methylxanthine N7-demethylase NdmC (282 aa).

It carries out the reaction 7-methylxanthine + NADPH + O2 + H(+) = xanthine + formaldehyde + NADP(+) + H2O. The catalysed reaction is 7-methylxanthine + NADH + O2 + H(+) = xanthine + formaldehyde + NAD(+) + H2O. Functionally, involved in the caffeine degradation, which is the essential first step for assimilating the carbon and nitrogen in caffeine. Probably catalyzes the N7-demethylation of 7-methylxanthine to produce xanthine and formaldehyde. In Pseudomonas sp. (strain TJI-51), this protein is Probable methylxanthine N7-demethylase NdmC.